The chain runs to 70 residues: DNA gyrase inhibitor YacG (70 aa).

Zn(2+)-binding residues include C9, C12, C28, and C32. Residues 43 to 70 (ESRKIPGSSIDPESIVTSNNKQDNVDEQ) form a disordered region.

The protein belongs to the DNA gyrase inhibitor YacG family. In terms of assembly, interacts with GyrB. The cofactor is Zn(2+).

In terms of biological role, inhibits all the catalytic activities of DNA gyrase by preventing its interaction with DNA. Acts by binding directly to the C-terminal domain of GyrB, which probably disrupts DNA binding by the gyrase. This is DNA gyrase inhibitor YacG from Legionella pneumophila (strain Lens).